Here is a 226-residue protein sequence, read N- to C-terminus: PKHD-type hydroxylase Sfri_0612 (226 aa).

One can recognise a Fe2OG dioxygenase domain in the interval Lys77 to Ser177. Fe cation is bound by residues His95, Asp97, and His158. 2-oxoglutarate is bound at residue Arg168.

Fe(2+) serves as cofactor. It depends on L-ascorbate as a cofactor.

The chain is PKHD-type hydroxylase Sfri_0612 from Shewanella frigidimarina (strain NCIMB 400).